The sequence spans 173 residues: Sterile alpha motif domain-containing protein 5 (173 aa).

The region spanning 1-65 is the SAM domain; sequence MCTNIVYEWL…LEAVRRLREQ (65 aa). Residues 75–119 are disordered; the sequence is TLEPQPAPPGPPADAVPTGRRGEPCGGPAQGTRGDSRGHTTAPRS. Residues 79–88 show a composition bias toward pro residues; it reads QPAPPGPPAD.

As to quaternary structure, interacts promiscuously (via SAM domain) with EPHA5, EPHA6, EPHA7, EPHA8, EPHB1, EPHB2, EPHB3 and EPHB4 (via SAM domain) (in vitro). Detected in biliary epithelial cells on bile ducts at the hepatic hilum (at protein level).

Its subcellular location is the cytoplasm. In Homo sapiens (Human), this protein is Sterile alpha motif domain-containing protein 5 (SAMD5).